Reading from the N-terminus, the 278-residue chain is Autotransporter adhesin BtaF (278 aa).

Residues 1 to 29 (MKLPPVFVFELVENQGLANIALIRPRVIA) form the signal peptide. The surface exposed passenger domain stretch occupies residues 30–182 (PDNNLRPGGI…RAAIRQNSAA (153 aa)). The outer membrane translocation of the passenger domain stretch occupies residues 186–224 (LGQRVDGLQGQINSARKEARAGAANAAALSGLRYDNRPG). A translocator domain region spans residues 225-278 (KVSIATGVGGFKGSTALAAGIGYTSKNENARYNVSVAYNEAGTSWNAGASFTLN).

It belongs to the autotransporter-2 (AT-2) (TC 1.B.40) family. Homotrimer.

It is found in the cell surface. It localises to the cell outer membrane. Participates in bacterial attachment to several surfaces, including various extracellular matrix (ECM) components and a hydrophobic abiotic surface. Involved in adhesion to host epithelial cells and is required for full virulence in mice. Also implicated in the resistance to porcine serum. The sequence is that of Autotransporter adhesin BtaF from Brucella suis biovar 1 (strain 1330).